A 101-amino-acid chain; its full sequence is uncharacterized protein (101 aa).

This is an uncharacterized protein from Saccharomyces cerevisiae (strain ATCC 204508 / S288c) (Baker's yeast).